Reading from the N-terminus, the 186-residue chain is Elongation factor P (186 aa).

This sequence belongs to the elongation factor P family.

The protein resides in the cytoplasm. The protein operates within protein biosynthesis; polypeptide chain elongation. In terms of biological role, involved in peptide bond synthesis. Stimulates efficient translation and peptide-bond synthesis on native or reconstituted 70S ribosomes in vitro. Probably functions indirectly by altering the affinity of the ribosome for aminoacyl-tRNA, thus increasing their reactivity as acceptors for peptidyl transferase. The protein is Elongation factor P of Prochlorococcus marinus (strain MIT 9303).